The primary structure comprises 307 residues: Ribonuclease Z (307 aa).

Zn(2+) contacts are provided by H63, H65, D67, H68, H141, D212, and H270. D67 functions as the Proton acceptor in the catalytic mechanism.

The protein belongs to the RNase Z family. In terms of assembly, homodimer. Zn(2+) serves as cofactor.

The enzyme catalyses Endonucleolytic cleavage of RNA, removing extra 3' nucleotides from tRNA precursor, generating 3' termini of tRNAs. A 3'-hydroxy group is left at the tRNA terminus and a 5'-phosphoryl group is left at the trailer molecule.. Functionally, zinc phosphodiesterase, which displays some tRNA 3'-processing endonuclease activity. Probably involved in tRNA maturation, by removing a 3'-trailer from precursor tRNA. The sequence is that of Ribonuclease Z from Bacillus cereus (strain G9842).